Reading from the N-terminus, the 249-residue chain is MRILIANDDGVTAPGIAALYDALADHADCVVIAPDQDKSGASSSLTLDRPLHPQRLDNGFISLNGTPTDCVHLGLNGLLEELPDMVVSGINLGANLGDDVLYSGTVAAAIEGRFLKGPAFAFSLVSRLTDNLPTAMHFARLLVSAHERLAVPPRTVLNVNIPNLPLDRVRGIQLTRLGHRARAAAPVKVVNPRGKEGYWIAAAGDAEDGGPGTDFHAVMQGYVSITPLQLDRTFHEAFGGLDEWLGGLT.

A divalent metal cation is bound by residues aspartate 8, aspartate 9, serine 39, and asparagine 91.

The protein belongs to the SurE nucleotidase family. Requires a divalent metal cation as cofactor.

The protein localises to the cytoplasm. It carries out the reaction a ribonucleoside 5'-phosphate + H2O = a ribonucleoside + phosphate. In terms of biological role, nucleotidase that shows phosphatase activity on nucleoside 5'-monophosphates. The sequence is that of 5'-nucleotidase SurE from Pseudomonas aeruginosa (strain UCBPP-PA14).